The primary structure comprises 443 residues: F-box only protein 39 (443 aa).

The F-box domain maps to 13 to 59 (QSCWATLPDVCLRRVFWWLGDRDRSRAALVCRKWNQIMYSADLWRYR).

As to quaternary structure, directly interacts with SKP1 and CUL1.

Its function is as follows. Substrate-recognition component of the SCF (SKP1-CUL1-F-box protein)-type E3 ubiquitin ligase complex. This is F-box only protein 39 (Fbxo39) from Mus musculus (Mouse).